Here is a 340-residue protein sequence, read N- to C-terminus: Ketol-acid reductoisomerase (NADP(+)) (340 aa).

Positions 3–183 constitute a KARI N-terminal Rossmann domain; the sequence is LSVYYDKDCN…GGGRTGIIET (181 aa). NADP(+)-binding positions include 26 to 29, serine 54, and 84 to 87; these read FGSQ and DELQ. The active site involves histidine 109. NADP(+) is bound at residue glycine 135. One can recognise a KARI C-terminal knotted domain in the interval 184 to 329; that stretch reads TFKDETETDL…ERLRAMMPWI (146 aa). Aspartate 192, glutamate 196, glutamate 228, and glutamate 232 together coordinate Mg(2+). Residue serine 253 coordinates substrate.

It belongs to the ketol-acid reductoisomerase family. Mg(2+) is required as a cofactor.

It catalyses the reaction (2R)-2,3-dihydroxy-3-methylbutanoate + NADP(+) = (2S)-2-acetolactate + NADPH + H(+). The catalysed reaction is (2R,3R)-2,3-dihydroxy-3-methylpentanoate + NADP(+) = (S)-2-ethyl-2-hydroxy-3-oxobutanoate + NADPH + H(+). It participates in amino-acid biosynthesis; L-isoleucine biosynthesis; L-isoleucine from 2-oxobutanoate: step 2/4. Its pathway is amino-acid biosynthesis; L-valine biosynthesis; L-valine from pyruvate: step 2/4. Involved in the biosynthesis of branched-chain amino acids (BCAA). Catalyzes an alkyl-migration followed by a ketol-acid reduction of (S)-2-acetolactate (S2AL) to yield (R)-2,3-dihydroxy-isovalerate. In the isomerase reaction, S2AL is rearranged via a Mg-dependent methyl migration to produce 3-hydroxy-3-methyl-2-ketobutyrate (HMKB). In the reductase reaction, this 2-ketoacid undergoes a metal-dependent reduction by NADPH to yield (R)-2,3-dihydroxy-isovalerate. The sequence is that of Ketol-acid reductoisomerase (NADP(+)) from Wolinella succinogenes (strain ATCC 29543 / DSM 1740 / CCUG 13145 / JCM 31913 / LMG 7466 / NCTC 11488 / FDC 602W) (Vibrio succinogenes).